A 344-amino-acid polypeptide reads, in one-letter code: Anthranilate phosphoribosyltransferase (344 aa).

5-phospho-alpha-D-ribose 1-diphosphate is bound by residues G86, 89–90 (GD), T94, 96–99 (NIST), 114–122 (KHGNKSASG), and S126. G86 is a binding site for anthranilate. S98 serves as a coordination point for Mg(2+). N117 contacts anthranilate. R172 provides a ligand contact to anthranilate. Mg(2+) contacts are provided by D231 and E232.

The protein belongs to the anthranilate phosphoribosyltransferase family. As to quaternary structure, homodimer. It depends on Mg(2+) as a cofactor.

The catalysed reaction is N-(5-phospho-beta-D-ribosyl)anthranilate + diphosphate = 5-phospho-alpha-D-ribose 1-diphosphate + anthranilate. The protein operates within amino-acid biosynthesis; L-tryptophan biosynthesis; L-tryptophan from chorismate: step 2/5. Functionally, catalyzes the transfer of the phosphoribosyl group of 5-phosphorylribose-1-pyrophosphate (PRPP) to anthranilate to yield N-(5'-phosphoribosyl)-anthranilate (PRA). In Prochlorococcus marinus (strain MIT 9215), this protein is Anthranilate phosphoribosyltransferase.